The sequence spans 265 residues: MTTAHRPQFDPARGHSEMAPTRITSSRALPAHLKLKYRQESQGTEEEVRKQDLREALLRAEAAHFATQEHGASSEEVSQNSKLIEGFTSPSTDDKPNNDVEVDYQELLRQTLEADEDASDSDDSVDSSNKNSEVSIKRRKTESNSQESVDSSNSESSDEESDSEDETQQLLRELENIKQERKREQMLQEEKNRALEQEKREREIAFGNELLNKASSGSFQVKRRWDEDVVFRNTHKGVDDTPRPGFVNDMLRSEFHKKFLARFVD.

Disordered regions lie at residues 1-31 (MTTA…ALPA) and 62-197 (AAHF…ALEQ). Over residues 113 to 125 (EADEDASDSDDSV) the composition is skewed to acidic residues. Over residues 143 to 155 (SNSQESVDSSNSE) the composition is skewed to low complexity. The stretch at 155–205 (ESSDEESDSEDETQQLLRELENIKQERKREQMLQEEKNRALEQEKREREIA) forms a coiled coil. Residues 156 to 167 (SSDEESDSEDET) show a composition bias toward acidic residues. The span at 172–197 (RELENIKQERKREQMLQEEKNRALEQ) shows a compositional bias: basic and acidic residues.

This sequence belongs to the CWC15 family. In terms of assembly, belongs to the 40S cdc5-associated complex (or cwf complex), a spliceosome sub-complex reminiscent of a late-stage spliceosome composed of the U2, U5 and U6 snRNAs and at least brr2, cdc5, cwf2/prp3, cwf3/syf1, cwf4/syf3, cwf5/ecm2, spp42/cwf6, cwf7/spf27, cwf8, cwf9, cwf10, cwf11, cwf12, prp45/cwf13, cwf14, cwf15, cwf16, cwf17, cwf18, cwf19, cwf20, cwf21, cwf22, cwf23, cwf24, cwf25, cwf26, cyp7/cwf27, cwf28, cwf29/ist3, lea1, msl1, prp5/cwf1, prp10, prp12/sap130, prp17, prp22, sap61, sap62, sap114, sap145, slu7, smb1, smd1, smd3, smf1, smg1 and syf2.

It is found in the nucleus. Involved in pre-mRNA splicing. The sequence is that of Pre-mRNA-splicing factor cwf15 (cwf15) from Schizosaccharomyces pombe (strain 972 / ATCC 24843) (Fission yeast).